Reading from the N-terminus, the 55-residue chain is Large ribosomal subunit protein bL33 (55 aa).

This sequence belongs to the bacterial ribosomal protein bL33 family.

This is Large ribosomal subunit protein bL33 from Granulibacter bethesdensis (strain ATCC BAA-1260 / CGDNIH1).